The primary structure comprises 209 residues: Glutathione S-transferase (209 aa).

Residues 7–91 form the GST N-terminal domain; sequence FFFFFFFFFS…YLSKKYNISG (85 aa). Residues 62-63, 75-76, D109, K121, and T125 contribute to the glutathione site; these read QV and QS. The GST C-terminal domain maps to 93-209; it reads GELNEFYADM…YIANRKESVY (117 aa).

This sequence belongs to the GST superfamily. In terms of assembly, homodimer. In the absence of ligands two homodimers may interact to form a tetramer.

The catalysed reaction is RX + glutathione = an S-substituted glutathione + a halide anion + H(+). In terms of biological role, conjugation of reduced glutathione to a wide number of exogenous and endogenous hydrophobic electrophiles. May also function as a storage protein or ligandin for parasitotoxic ferriprotoporphyrin IX (hemin). This chain is Glutathione S-transferase, found in Plasmodium yoelii yoelii.